Consider the following 195-residue polypeptide: MEKFTVHTGRAVPLRYSNVDTDQIIPAVYLKRVTRTGFEDGLFAAWRTDPDFVLNKPEYKDGTILIAGPDFGTGSSREHAVWALQNYGFKAVLSSRFADIFRGNSLKGGLLTVVLPQPVIEQLWEMVEADPATEITVDLVNREVRAKDIVEPFELDDYTRWRLMEGLDDIDLTLRHVDAIAEYEKRRKPWLPVTQ.

Belongs to the LeuD family. LeuD type 1 subfamily. As to quaternary structure, heterodimer of LeuC and LeuD.

It catalyses the reaction (2R,3S)-3-isopropylmalate = (2S)-2-isopropylmalate. Its pathway is amino-acid biosynthesis; L-leucine biosynthesis; L-leucine from 3-methyl-2-oxobutanoate: step 2/4. In terms of biological role, catalyzes the isomerization between 2-isopropylmalate and 3-isopropylmalate, via the formation of 2-isopropylmaleate. The polypeptide is 3-isopropylmalate dehydratase small subunit (Thermobifida fusca (strain YX)).